Reading from the N-terminus, the 121-residue chain is Large ribosomal subunit protein uL22 (121 aa).

Belongs to the universal ribosomal protein uL22 family. As to quaternary structure, part of the 50S ribosomal subunit.

This protein binds specifically to 23S rRNA; its binding is stimulated by other ribosomal proteins, e.g. L4, L17, and L20. It is important during the early stages of 50S assembly. It makes multiple contacts with different domains of the 23S rRNA in the assembled 50S subunit and ribosome. In terms of biological role, the globular domain of the protein is located near the polypeptide exit tunnel on the outside of the subunit, while an extended beta-hairpin is found that lines the wall of the exit tunnel in the center of the 70S ribosome. This chain is Large ribosomal subunit protein uL22, found in Synechocystis sp. (strain ATCC 27184 / PCC 6803 / Kazusa).